The sequence spans 85 residues: ATP synthase subunit c (85 aa).

Helical transmembrane passes span 22–39 (AIGA…IGKI) and 65–85 (AALI…VFFL).

It belongs to the ATPase C chain family. In terms of assembly, F-type ATPases have 2 components, F(1) - the catalytic core - and F(0) - the membrane proton channel. F(1) has five subunits: alpha(3), beta(3), gamma(1), delta(1), epsilon(1). F(0) has three main subunits: a(1), b(2) and c(10-14). The alpha and beta chains form an alternating ring which encloses part of the gamma chain. F(1) is attached to F(0) by a central stalk formed by the gamma and epsilon chains, while a peripheral stalk is formed by the delta and b chains.

Its subcellular location is the cell inner membrane. In terms of biological role, f(1)F(0) ATP synthase produces ATP from ADP in the presence of a proton or sodium gradient. F-type ATPases consist of two structural domains, F(1) containing the extramembraneous catalytic core and F(0) containing the membrane proton channel, linked together by a central stalk and a peripheral stalk. During catalysis, ATP synthesis in the catalytic domain of F(1) is coupled via a rotary mechanism of the central stalk subunits to proton translocation. Key component of the F(0) channel; it plays a direct role in translocation across the membrane. A homomeric c-ring of between 10-14 subunits forms the central stalk rotor element with the F(1) delta and epsilon subunits. This chain is ATP synthase subunit c, found in Bacteroides thetaiotaomicron (strain ATCC 29148 / DSM 2079 / JCM 5827 / CCUG 10774 / NCTC 10582 / VPI-5482 / E50).